A 433-amino-acid polypeptide reads, in one-letter code: Serine hydroxymethyltransferase (433 aa).

Residues leucine 132 and 136–138 each bind (6S)-5,6,7,8-tetrahydrofolate; that span reads GHL. An N6-(pyridoxal phosphate)lysine modification is found at lysine 241.

It belongs to the SHMT family. In terms of assembly, homodimer. Pyridoxal 5'-phosphate is required as a cofactor.

Its subcellular location is the cytoplasm. The catalysed reaction is (6R)-5,10-methylene-5,6,7,8-tetrahydrofolate + glycine + H2O = (6S)-5,6,7,8-tetrahydrofolate + L-serine. Its pathway is one-carbon metabolism; tetrahydrofolate interconversion. The protein operates within amino-acid biosynthesis; glycine biosynthesis; glycine from L-serine: step 1/1. Functionally, catalyzes the reversible interconversion of serine and glycine with tetrahydrofolate (THF) serving as the one-carbon carrier. This reaction serves as the major source of one-carbon groups required for the biosynthesis of purines, thymidylate, methionine, and other important biomolecules. Also exhibits THF-independent aldolase activity toward beta-hydroxyamino acids, producing glycine and aldehydes, via a retro-aldol mechanism. The chain is Serine hydroxymethyltransferase from Afipia carboxidovorans (strain ATCC 49405 / DSM 1227 / KCTC 32145 / OM5) (Oligotropha carboxidovorans).